A 572-amino-acid polypeptide reads, in one-letter code: Triacylglycerol lipase OBL1 (572 aa).

Residues 110-130 (GYLVEFFLNLFSLNGNFLGLL) form a helical membrane-spanning segment. Residues 320–356 (IPPSESSKSSTSFSDSDAHTGSDLSSDSERPTDTRKK) are disordered. Residues 323–334 (SESSKSSTSFSD) are compositionally biased toward low complexity. Positions 346-356 (DSERPTDTRKK) are enriched in basic and acidic residues. Residues 391-395 (GHSLG) carry the GXSXG motif. The active-site Nucleophile is the Ser393. Active-site charge relay system residues include Asp457 and His550.

It belongs to the AB hydrolase superfamily. Lipase family. As to expression, expressed in pollen grains and pollen tubes.

Its subcellular location is the lipid droplet. It is found in the membrane. It catalyses the reaction 1,2-di-(9Z-octadecenoyl)-glycerol + (9Z)-octadecenoate + H(+) = 1,2,3-tri-(9Z-octadecenoyl)-glycerol + H2O. The catalysed reaction is 1-(9Z-octadecenoyl)-glycerol + H2O = glycerol + (9Z)-octadecenoate + H(+). Functionally, acid lipase that can hydrolyze a range of triacylglycerols without a clear preference for acyl-chains. Can also cleave 1,2-diacylglycerol, 1,3-diacylglycerol and 1-monoacylglycerol, but not phosphatidylcholine, phosphatidylethanolamine, or sterol esters. Required for pollen tube growth. Triacylglycerol hydrolysis by OBL1 may provide acyl groups for the synthesis of membrane lipids in growing pollen tubes. This chain is Triacylglycerol lipase OBL1, found in Nicotiana tabacum (Common tobacco).